A 129-amino-acid chain; its full sequence is Small ribosomal subunit protein uS11 (129 aa).

The protein belongs to the universal ribosomal protein uS11 family. In terms of assembly, part of the 30S ribosomal subunit. Interacts with proteins S7 and S18. Binds to IF-3.

Located on the platform of the 30S subunit, it bridges several disparate RNA helices of the 16S rRNA. Forms part of the Shine-Dalgarno cleft in the 70S ribosome. This is Small ribosomal subunit protein uS11 from Methylobacillus flagellatus (strain ATCC 51484 / DSM 6875 / VKM B-1610 / KT).